The sequence spans 253 residues: A-type ATP synthase subunit B (253 aa).

Belongs to the ATPase alpha/beta chains family. As to quaternary structure, has multiple subunits with at least A(3), B(3), C, D, E, F, H, I and proteolipid K(x).

The protein resides in the cell membrane. Functionally, component of the A-type ATP synthase that produces ATP from ADP in the presence of a proton gradient across the membrane. The B chain is a regulatory subunit. The chain is A-type ATP synthase subunit B from Methanothermococcus thermolithotrophicus (Methanococcus thermolithotrophicus).